A 184-amino-acid polypeptide reads, in one-letter code: Putative tetraheme cytochrome-c type (184 aa).

The Cytoplasmic segment spans residues 1-14 (MSKHAASSAKRFSL). Residues 15–35 (LALGLMFVGGIVFVWAVDFGI) form a helical membrane-spanning segment. Residues 36-184 (KTTNTLEFCT…HEPTEPDDAS (149 aa)) are Periplasmic-facing. C44, C47, M50, C73, C76, and H77 together coordinate heme. The substrate site is built by K89 and D95. Heme contacts are provided by D95, C133, C136, H137, C165, C168, H169, and H174.

This sequence belongs to the NapC/NirT/NrfH family. Post-translationally, binds 4 heme groups per subunit.

It localises to the cell inner membrane. The protein is Putative tetraheme cytochrome-c type of Allochromatium vinosum (strain ATCC 17899 / DSM 180 / NBRC 103801 / NCIMB 10441 / D) (Chromatium vinosum).